Consider the following 217-residue polypeptide: MSSKVSRDTLYEAVREVLHGNQRKRRKFLETVELQISLKNYDPQKDKRFSGTVRLKSTPRPKFSVCVLGDQQHCDEAKAVDIPHMDIEALKKLNKNKKLVKKLAKKYDAFLASESLIKQIPRILGPGLNKAGKFPSPLTHNENMVAKVDEVKSTIKFQMKRVLCLAVAVGHVKMTDDELVYNIHLAVNFLVSLLKKNWQNVRALYIKSTMGKPQRLY.

An N-acetylserine modification is found at Ser2. Tyr11 carries the post-translational modification Phosphotyrosine. N6-acetyllysine occurs at positions 91 and 106. At Lys118 the chain carries N6-acetyllysine; alternate. Lys118 is covalently cross-linked (Glycyl lysine isopeptide (Lys-Gly) (interchain with G-Cter in SUMO1); alternate). Lys118 participates in a covalent cross-link: Glycyl lysine isopeptide (Lys-Gly) (interchain with G-Cter in SUMO2); alternate.

Belongs to the universal ribosomal protein uL1 family. Component of the large ribosomal subunit.

It localises to the cytoplasm. Functionally, component of the large ribosomal subunit. The ribosome is a large ribonucleoprotein complex responsible for the synthesis of proteins in the cell. The protein is Large ribosomal subunit protein uL1 (RPL10A) of Macaca fascicularis (Crab-eating macaque).